The following is a 223-amino-acid chain: Ribosome assembly factor mrt4 (223 aa).

This sequence belongs to the universal ribosomal protein uL10 family. As to quaternary structure, associates with the pre-60S ribosomal particle.

The protein resides in the nucleus. The protein localises to the nucleolus. It is found in the cytoplasm. In terms of biological role, component of the ribosome assembly machinery. Nuclear paralog of the ribosomal protein P0, it binds pre-60S subunits at an early stage of assembly in the nucleolus, and is replaced by P0 in cytoplasmic pre-60S subunits and mature 80S ribosomes. The protein is Ribosome assembly factor mrt4 of Dictyostelium discoideum (Social amoeba).